Reading from the N-terminus, the 302-residue chain is Probable alpha-L-glutamate ligase (302 aa).

One can recognise an ATP-grasp domain in the interval 105–288; sequence LQLLARKGIP…LAGKIIEYIE (184 aa). ATP-binding positions include K142, 179 to 180, D188, and 212 to 214; these read EF and RAN. Positions 249, 261, and 263 each coordinate Mg(2+). Mn(2+) is bound by residues D249, E261, and N263.

This sequence belongs to the RimK family. Requires Mg(2+) as cofactor. It depends on Mn(2+) as a cofactor.

The sequence is that of Probable alpha-L-glutamate ligase from Legionella pneumophila (strain Paris).